Here is an 802-residue protein sequence, read N- to C-terminus: Outer membrane usher protein PefC (802 aa).

The signal sequence occupies residues 1–24; sequence MSFHHRVFKLSALSLALFSHLSFA. The cysteines at positions 782 and 801 are disulfide-linked.

The protein belongs to the fimbrial export usher family.

It localises to the cell outer membrane. Involved in the export and assembly of FimA fimbrial subunits across the outer membrane. The polypeptide is Outer membrane usher protein PefC (pefC) (Salmonella typhimurium (strain LT2 / SGSC1412 / ATCC 700720)).